A 498-amino-acid chain; its full sequence is Putative antiporter subunit mnhD2 (498 aa).

14 consecutive transmembrane segments (helical) span residues 2-22, 32-52, 78-98, 108-128, 130-150, 161-181, 209-229, 240-260, 271-291, 308-328, 330-350, 368-388, 403-423, and 450-470; these read LSNL…ILVF, YLYL…LIYV, LSLI…AYGF, YHLP…FLTS, LFNL…LITL, IIYV…IGLL, ISLI…FMWL, LAAL…IRFF, IHPL…IGVI, IGFI…GAIF, LVND…LVYI, FFGV…PFSG, GNYI…YSLF, and GILS…PVLL.

It belongs to the CPA3 antiporters (TC 2.A.63) subunit D family. May form a heterooligomeric complex that consists of seven subunits: mnhA2, mnhB2, mnhC2, mnhD2, mnhE2, mnhF2 and mnhG2.

It localises to the cell membrane. The sequence is that of Putative antiporter subunit mnhD2 (mnhD2) from Staphylococcus aureus (strain MRSA252).